Reading from the N-terminus, the 209-residue chain is MKKAILGKKLGMTQIFNENGRVIPVTVIEAGPCVVVQKKTEEKDGYKSIQIGFGDIREKLVNKPLKGHFAKSGVSLKRFLKEFKVDNIDEYEVGQEIKADIFAEGDRIDVSGISKGKGFQGVIRRWNAQRGPMSHGSKFHRAVGSMGASSDPSRTFKNKKMPGHMGNKNTTVLNLQVAKVIPEKNIILIKGGVPGPNKSFVSIKDTVKA.

Positions R130–R154 are disordered.

It belongs to the universal ribosomal protein uL3 family. Part of the 50S ribosomal subunit. Forms a cluster with proteins L14 and L19.

Functionally, one of the primary rRNA binding proteins, it binds directly near the 3'-end of the 23S rRNA, where it nucleates assembly of the 50S subunit. This is Large ribosomal subunit protein uL3 from Clostridium kluyveri (strain NBRC 12016).